Reading from the N-terminus, the 312-residue chain is Serine/threonine-protein phosphatase CPPED1 (312 aa).

Position 2 is a phosphoserine (Ser-2). The catalytic stretch occupies residues 47-250 (KAWSTGNCDN…AVFSGHYHRN (204 aa)). Positions 90, 127, and 246 each coordinate a divalent metal cation. The residue at position 293 (Ser-293) is a Phosphoserine.

This sequence belongs to the metallophosphoesterase superfamily. CPPED1 family. A divalent metal cation serves as cofactor.

Its subcellular location is the cytoplasm. It carries out the reaction O-phospho-L-seryl-[protein] + H2O = L-seryl-[protein] + phosphate. The catalysed reaction is O-phospho-L-threonyl-[protein] + H2O = L-threonyl-[protein] + phosphate. In terms of biological role, protein phosphatase that dephosphorylates AKT family kinase specifically at 'Ser-473', blocking cell cycle progression and promoting cell apoptosis. May play an inhibitory role in glucose uptake by adipocytes. The protein is Serine/threonine-protein phosphatase CPPED1 (Cpped1) of Rattus norvegicus (Rat).